Consider the following 39-residue polypeptide: Metallocarboxypeptidase inhibitor (39 aa).

Glutamine 1 carries the post-translational modification Pyrrolidone carboxylic acid. 3 disulfides stabilise this stretch: cysteine 8–cysteine 24, cysteine 12–cysteine 27, and cysteine 18–cysteine 34.

In terms of tissue distribution, highly concentrated in tubers. Closely related but distinct forms of MCPI are present in leaves, stems and buds.

Its function is as follows. May play a defensive role against insect attacks. Inhibits A.aegypti carboxypeptidase CPB1. The protein is Metallocarboxypeptidase inhibitor of Solanum tuberosum (Potato).